A 146-amino-acid polypeptide reads, in one-letter code: Large ribosomal subunit protein uL15 (146 aa).

The tract at residues Met-1–Met-54 is disordered.

Belongs to the universal ribosomal protein uL15 family. In terms of assembly, part of the 50S ribosomal subunit.

Binds to the 23S rRNA. This Mycobacterium marinum (strain ATCC BAA-535 / M) protein is Large ribosomal subunit protein uL15.